The following is an 88-amino-acid chain: Sec-independent protein translocase protein TatA (88 aa).

Residues 1–21 (MGGIGIWQLAIITVIVILLFG) form a helical membrane-spanning segment. The interval 46–88 (DNDKDSTQVDDKDSTQVDDNAKQPSNKKVEENIKEQSKEKDRA) is disordered.

The protein belongs to the TatA/E family. In terms of assembly, the Tat system comprises two distinct complexes: a TatABC complex, containing multiple copies of TatA, TatB and TatC subunits, and a separate TatA complex, containing only TatA subunits. Substrates initially bind to the TatABC complex, which probably triggers association of the separate TatA complex to form the active translocon.

Its subcellular location is the cell inner membrane. Part of the twin-arginine translocation (Tat) system that transports large folded proteins containing a characteristic twin-arginine motif in their signal peptide across membranes. TatA could form the protein-conducting channel of the Tat system. This chain is Sec-independent protein translocase protein TatA, found in Psychromonas ingrahamii (strain DSM 17664 / CCUG 51855 / 37).